The chain runs to 515 residues: Protein translocase subunit SecD (515 aa).

A helical transmembrane segment spans residues 6 to 26 (LYSLIFIIILTAFAVWVDLPG). The segment at 141 to 186 (AITNGNQNQNSTKNGTPTPGTTPTPESTPQANQTPVAANVTPTPED) is disordered. The span at 150–169 (NSTKNGTPTPGTTPTPESTP) shows a compositional bias: low complexity. The span at 170–186 (QANQTPVAANVTPTPED) shows a compositional bias: polar residues. The next 5 helical transmembrane spans lie at 322 to 342 (RSIR…ILYY), 344 to 364 (LPGF…FALF), 367 to 387 (IPVT…GMAV), 427 to 447 (ISTL…GASV), and 450 to 470 (GFAI…IFVT).

Belongs to the SecD/SecF family. SecD subfamily. As to quaternary structure, forms a complex with SecF. Part of the essential Sec protein translocation apparatus which comprises SecA, SecYEG and auxiliary proteins SecDF. Other proteins may also be involved.

The protein resides in the cell membrane. Its function is as follows. Part of the Sec protein translocase complex. Interacts with the SecYEG preprotein conducting channel. SecDF uses the proton motive force (PMF) to complete protein translocation after the ATP-dependent function of SecA. This chain is Protein translocase subunit SecD, found in Thermobaculum terrenum (strain ATCC BAA-798 / CCMEE 7001 / YNP1).